Consider the following 157-residue polypeptide: Jacalin-related lectin 15 (157 aa).

A Jacalin-type lectin domain is found at 13-152; that stretch reads ADKLEAKGGN…LTSLGAYFAP (140 aa).

Belongs to the jacalin lectin family. Expressed in stems, leaves and flowers. Not detected in roots.

Confers broad resistance to potexviruses. Inhibits virus accumulation at the cellular level. The sequence is that of Jacalin-related lectin 15 (JAL15) from Arabidopsis thaliana (Mouse-ear cress).